We begin with the raw amino-acid sequence, 213 residues long: Orotate phosphoribosyltransferase (213 aa).

Lysine 26 is a binding site for 5-phospho-alpha-D-ribose 1-diphosphate. Phenylalanine 34–phenylalanine 35 is an orotate binding site. 5-phospho-alpha-D-ribose 1-diphosphate contacts are provided by residues tyrosine 72 to lysine 73, arginine 99, lysine 100, lysine 103, histidine 105, and aspartate 124 to alanine 132. Orotate contacts are provided by threonine 128 and arginine 156.

It belongs to the purine/pyrimidine phosphoribosyltransferase family. PyrE subfamily. As to quaternary structure, homodimer. The cofactor is Mg(2+).

The catalysed reaction is orotidine 5'-phosphate + diphosphate = orotate + 5-phospho-alpha-D-ribose 1-diphosphate. It participates in pyrimidine metabolism; UMP biosynthesis via de novo pathway; UMP from orotate: step 1/2. Its function is as follows. Catalyzes the transfer of a ribosyl phosphate group from 5-phosphoribose 1-diphosphate to orotate, leading to the formation of orotidine monophosphate (OMP). This is Orotate phosphoribosyltransferase from Pseudomonas syringae pv. tomato (strain ATCC BAA-871 / DC3000).